A 30-amino-acid chain; its full sequence is Ribosome-inactivating protein momorcochin-S (30 aa).

It belongs to the ribosome-inactivating protein family. Type 1 RIP subfamily. Glycosylated.

The enzyme catalyses Endohydrolysis of the N-glycosidic bond at one specific adenosine on the 28S rRNA.. Its function is as follows. Inactivates eukaryotic 60S ribosomal subunits. This is Ribosome-inactivating protein momorcochin-S from Momordica cochinchinensis (Spiny bitter cucumber).